The primary structure comprises 81 residues: Alpha-toxin Ac1 (81 aa).

A signal peptide spans 1–17 (YIVMISLALVVMIGVES). Residues 19 to 80 (RDGYIVYPNN…PIKDPSQKCT (62 aa)) form the LCN-type CS-alpha/beta domain. 4 disulfides stabilise this stretch: Cys-29–Cys-79, Cys-33–Cys-51, Cys-37–Cys-61, and Cys-41–Cys-63.

It belongs to the long (4 C-C) scorpion toxin superfamily. Sodium channel inhibitor family. Alpha subfamily. In terms of tissue distribution, expressed by the venom gland.

The protein resides in the secreted. Alpha toxins bind voltage-independently at site-3 of sodium channels (Nav) and inhibit the inactivation of the activated channels, thereby blocking neuronal transmission. This is Alpha-toxin Ac1 from Androctonus crassicauda (Arabian fat-tailed scorpion).